The sequence spans 233 residues: Orotidine 5'-phosphate decarboxylase (233 aa).

Residues D12, K34, D61–T70, T116, R181, Q190, G210, and R211 contribute to the substrate site. The active-site Proton donor is the K63.

Belongs to the OMP decarboxylase family. Type 1 subfamily. Homodimer.

It carries out the reaction orotidine 5'-phosphate + H(+) = UMP + CO2. It participates in pyrimidine metabolism; UMP biosynthesis via de novo pathway; UMP from orotate: step 2/2. In terms of biological role, catalyzes the decarboxylation of orotidine 5'-monophosphate (OMP) to uridine 5'-monophosphate (UMP). The protein is Orotidine 5'-phosphate decarboxylase of Caulobacter vibrioides (strain ATCC 19089 / CIP 103742 / CB 15) (Caulobacter crescentus).